A 247-amino-acid polypeptide reads, in one-letter code: SATTFYDCRECGKRYTKRNNLYIHQRVHVKEKPFPCTECGKGFSHKSQLIIHQRVHTGEKPFICSECGKGFSKNYGLILHLRVHTGEKPFVCTECGQRFSKNNVLSMHQRVHTGEKPFTCTECGKRFSQKRQLNLHLRVHTGEKPFVCTECGKRFSKNDVLLIHLRVHTGEKPFMCADCGRCFSVSSSLKYHQRICTGKKPLTSTECGESFKLNLNPIIHAEESQSCAECGKCFSSNYNLSLHMRVH.

C2H2-type zinc fingers lie at residues Y6–H28, F34–H56, F62–H84, F90–H112, F118–H140, F146–H168, F174–C196, and Q225–H247.

Belongs to the krueppel C2H2-type zinc-finger protein family.

The protein localises to the nucleus. May be involved in transcriptional regulation. In Xenopus laevis (African clawed frog), this protein is Oocyte zinc finger protein XlCOF20.